The primary structure comprises 449 residues: 1H-pyrrole-2-carbonyl-[peptidyl-carrier protein] chlorinase (449 aa).

FAD is bound by residues Ala16, Glu35, Arg41, His43, Val44, Ser47, Arg123, Ile147, and Asp316. Chloride-binding residues include Ser327 and Gly328. Val329 contacts FAD.

Belongs to the flavin-dependent halogenase family. Homodimer.

The enzyme catalyses (1H-pyrrole-2-carbonyl)-[peptidyl-carrier protein] + 2 FADH2 + 2 chloride + 2 O2 = (4,5-dichloro-1H-pyrrole-2-carbonyl)-[peptidyl-carrier protein] + 2 FAD + 4 H2O. It carries out the reaction (1H-pyrrole-2-carbonyl)-[peptidyl-carrier protein] + FADH2 + chloride + O2 = (5-chloro-1H-pyrrole-2-carbonyl)-[peptidyl-carrier protein] + FAD + 2 H2O. It catalyses the reaction (5-chloro-1H-pyrrole-2-carbonyl)-[peptidyl-carrier protein] + FADH2 + chloride + O2 = (4,5-dichloro-1H-pyrrole-2-carbonyl)-[peptidyl-carrier protein] + FAD + 2 H2O. It participates in antibiotic biosynthesis. Functionally, involved in the biosynthesis of the antibiotic pyoluteorin. Catalyzes the dichlorination of the pyrrole ring of pyrrolyl-S-PltL, generating the 5-chloropyrrolyl-S-PltL intermediate and then the 4,5-dichloropyrrolyl-S-PltL product. In Pseudomonas fluorescens (strain ATCC BAA-477 / NRRL B-23932 / Pf-5), this protein is 1H-pyrrole-2-carbonyl-[peptidyl-carrier protein] chlorinase.